A 348-amino-acid polypeptide reads, in one-letter code: Ion-translocating oxidoreductase complex subunit D (348 aa).

Transmembrane regions (helical) follow at residues 20 to 39 (VMRL…CYLF), 67 to 87 (YVVS…LIAV), and 124 to 144 (AMVG…NWMA). Thr-187 is subject to FMN phosphoryl threonine. The next 4 membrane-spanning stretches (helical) occupy residues 221-241 (WINL…LIPW), 244-264 (PVAM…LAPA), 266-286 (FAMP…FFII), and 300-320 (LVFG…GGYP).

This sequence belongs to the NqrB/RnfD family. In terms of assembly, the complex is composed of six subunits: RnfA, RnfB, RnfC, RnfD, RnfE and RnfG. The cofactor is FMN.

Its subcellular location is the cell inner membrane. Functionally, part of a membrane-bound complex that couples electron transfer with translocation of ions across the membrane. The sequence is that of Ion-translocating oxidoreductase complex subunit D from Tolumonas auensis (strain DSM 9187 / NBRC 110442 / TA 4).